The chain runs to 322 residues: Epiphycan (322 aa).

The N-terminal stretch at 1 to 19 is a signal peptide; sequence MKTLAGLVLGLVIFDAAVT. The O-linked (GalNAc...) threonine glycan is linked to threonine 60. O-linked (Xyl...) (dermatan sulfate) serine glycosylation occurs at serine 64. The segment at 64 to 101 is disordered; the sequence is SGNRELLTPPPQPEKAQEEEEEEESTPRLIDGSSPQEP. Serine 96 is a glycosylation site (O-linked (GalNAc...) serine). Residues 106 to 143 form the LRRNT domain; sequence VLGPHTNEDFPTCLLCTCISTTVYCDDHELDAIPPLPK. An intrachain disulfide couples cysteine 118 to cysteine 130. LRR repeat units lie at residues 144–165, 168–189, 192–213, 238–258, and 259–280; these read NTAYFYSRFNRIKKINKNDFAS, DLKRIDLTSNLISEIDEDAFRK, QLRELVLRDNKIRQLPELPTTL, DLHHLYLTDNNLDHIPLPLPE, and NLRALHLQNNNILEMHEDTFCN. An intrachain disulfide couples cysteine 279 to cysteine 312. N-linked (GlcNAc...) asparagine glycosylation is found at asparagine 283 and asparagine 302. Residues 290–310 form an LRR 6 repeat; the sequence is ALEDIRLDGNPINLSKTPQAY.

It belongs to the small leucine-rich proteoglycan (SLRP) family. SLRP class III subfamily. Post-translationally, the O-linked polysaccharides on Thr-60 and Ser-96 are probably the mucin type linked to GalNAc. There is one glycosaminoglycan chain, known to be dermatan sulfate, and it is probably the O-glycosylation at Ser-64. In terms of tissue distribution, cartilage, ligament, and placenta.

It localises to the secreted. The protein resides in the extracellular space. The protein localises to the extracellular matrix. May have a role in bone formation and also in establishing the ordered structure of cartilage through matrix organization. This Homo sapiens (Human) protein is Epiphycan (EPYC).